The following is a 195-amino-acid chain: ALK and LTK ligand 2b (195 aa).

Intrachain disulfides connect Cys-156/Cys-192 and Cys-170/Cys-179.

The protein belongs to the ALKAL family. Homodimer. In terms of tissue distribution, highly expressed in the swim bladder and single cells of unknown identity in the head.

The protein resides in the secreted. It localises to the cell membrane. Cytokine that acts as a physiological ligand for receptor tyrosine kinases LTK and ALK. Required for neural crest cell differentiation and iridophore development during embryonic iridophore development and adult stripe development by acting as a receptor for LTK. Also required for iridophore formation in the adult eye. This chain is ALK and LTK ligand 2b, found in Danio rerio (Zebrafish).